Consider the following 601-residue polypeptide: Glutathione-regulated potassium-efflux system protein KefB (601 aa).

13 helical membrane passes run 4 to 24 (ADLL…VPLA), 29 to 49 (IGAV…GLGF), 55 to 75 (EILH…GLEL), 87 to 107 (IFGV…GLLM), 111 to 131 (FLWQ…TAMA), 152 to 172 (VLLF…LLAG), 177 to 197 (HFDW…LIGG), 207 to 227 (FIAA…LVLS), 230 to 250 (LFMD…GVLL), 262 to 282 (AIDP…GMSL), 284 to 304 (LGVL…LVVI), 324 to 344 (MQFA…FSTA), and 356 to 376 (ALLL…MKGI). The region spanning 400–519 (KPQVIVVGFG…AGVTQFSRET (120 aa)) is the RCK N-terminal domain.

It belongs to the monovalent cation:proton antiporter 2 (CPA2) transporter (TC 2.A.37) family. KefB subfamily. In terms of assembly, interacts with the regulatory subunit KefG.

The protein resides in the cell inner membrane. Pore-forming subunit of a potassium efflux system that confers protection against electrophiles. Catalyzes K(+)/H(+) antiport. This chain is Glutathione-regulated potassium-efflux system protein KefB, found in Salmonella paratyphi B (strain ATCC BAA-1250 / SPB7).